The following is a 121-amino-acid chain: SPbeta prophage-derived uncharacterized protein YorW (121 aa).

The polypeptide is SPbeta prophage-derived uncharacterized protein YorW (yorW) (Bacillus subtilis (strain 168)).